A 454-amino-acid polypeptide reads, in one-letter code: Keratin, type I cuticular Ha5 (454 aa).

Residues 1–97 (MASKCLKASF…FGEGILTGNE (97 aa)) form a head region. One can recognise an IF rod domain in the interval 97–407 (EKETMQFLND…GLLDSEDCKL (311 aa)). Residues 98 to 125 (KETMQFLNDRLASYLEKCGSWSGRTRSW) form a coil 1A region. The interval 134–142 (SNSALPVPD) is linker 1. The segment at 143 to 243 (YQSYFQTIEE…HEEEVNSLRC (101 aa)) is coil 1B. Residues 244–259 (QLGDRLNVEVDAAPPV) form a linker 12 region. Residues 260-403 (DLNRVLNEMR…NTYRGLLDSE (144 aa)) are coil 2. Residues 404-454 (DCKLPCNPCAPDHSPSKSCLPCLPAASCGPGMARTTCSPRPICVPCPGSRF) are tail.

The protein belongs to the intermediate filament family.

This Bos taurus (Bovine) protein is Keratin, type I cuticular Ha5.